A 482-amino-acid chain; its full sequence is MKFIVKPHPEIFCKSDSVRKRFIKILDSNIRIMVKRVSESVAVYNRRYHIEVTANDDSDRDQILAILMQTPGIHHTLEVKQTEFKDLHDIFEQTLELVGEQLEGKTFCVRAKRRGQHDFTSIELERYVGGGLNQAVESASVKLKNPDITVRIEVDYDHLHQVLHRHKGLGGFPLGTQEDVLSLISGGFDSGVSSYLHIKRGSKVHYCFFNLGGPAHEIGVKQVSHFLWKKYGSSAKVKFISIDFEPVVAEILEKVDNGQMGVVLKRMFMRAAGQVAERYGIQALVTGEALGQVSSQTLTNLRMIDNVTDSLILRPLINWDKEDIIDIARNIGTEEFAKTMPEFCGVISKNPTIKAVKAKLEKEEANFDFAILDRVIEEARVMDIRDIEKQSQEQAPEIELVDQIGDGAIVLDIRSPDEEDESPLVIDGVEVKHLPFYKLATQFGDLDQDKEYLLYCDRGVMSRLQALYLTENGYGNIKVYRP.

The 105-residue stretch at 61-165 (DQILAILMQT…YDHLHQVLHR (105 aa)) folds into the THUMP domain. Residues 183–184 (LI), Lys265, Gly287, and Gln296 contribute to the ATP site. An intrachain disulfide couples Cys344 to Cys456. The region spanning 404 to 482 (IGDGAIVLDI…GYGNIKVYRP (79 aa)) is the Rhodanese domain. The active-site Cysteine persulfide intermediate is the Cys456.

This sequence belongs to the ThiI family.

The protein resides in the cytoplasm. It carries out the reaction [ThiI sulfur-carrier protein]-S-sulfanyl-L-cysteine + a uridine in tRNA + 2 reduced [2Fe-2S]-[ferredoxin] + ATP + H(+) = [ThiI sulfur-carrier protein]-L-cysteine + a 4-thiouridine in tRNA + 2 oxidized [2Fe-2S]-[ferredoxin] + AMP + diphosphate. The catalysed reaction is [ThiS sulfur-carrier protein]-C-terminal Gly-Gly-AMP + S-sulfanyl-L-cysteinyl-[cysteine desulfurase] + AH2 = [ThiS sulfur-carrier protein]-C-terminal-Gly-aminoethanethioate + L-cysteinyl-[cysteine desulfurase] + A + AMP + 2 H(+). The protein operates within cofactor biosynthesis; thiamine diphosphate biosynthesis. Its function is as follows. Catalyzes the ATP-dependent transfer of a sulfur to tRNA to produce 4-thiouridine in position 8 of tRNAs, which functions as a near-UV photosensor. Also catalyzes the transfer of sulfur to the sulfur carrier protein ThiS, forming ThiS-thiocarboxylate. This is a step in the synthesis of thiazole, in the thiamine biosynthesis pathway. The sulfur is donated as persulfide by IscS. This is tRNA sulfurtransferase from Photobacterium profundum (strain SS9).